Consider the following 92-residue polypeptide: Small ribosomal subunit protein bS20 (92 aa).

A disordered region spans residues 1-23; sequence MANTPSAKKRAKQAEKRRSHNAS. Over residues 7 to 20 the composition is skewed to basic residues; that stretch reads AKKRAKQAEKRRSH.

This sequence belongs to the bacterial ribosomal protein bS20 family.

In terms of biological role, binds directly to 16S ribosomal RNA. In Pseudomonas entomophila (strain L48), this protein is Small ribosomal subunit protein bS20.